A 438-amino-acid chain; its full sequence is Dihydrolipoyllysine-residue acetyltransferase component of pyruvate dehydrogenase complex (438 aa).

The Lipoyl-binding domain maps to 1-76 (MFKVKFADIG…KVGDVVMEIE (76 aa)). Residue K42 is modified to N6-lipoyllysine. The region spanning 132–169 (KATPLARKVAADLNIDLSLVTPTGPNQRILVADIKNHQ) is the Peripheral subunit-binding (PSBD) domain. Over residues 172–181 (STQLASQPIS) the composition is skewed to polar residues. The disordered stretch occupies residues 172–192 (STQLASQPISQPAPTPSPSAH). H411 is an active-site residue.

It belongs to the 2-oxoacid dehydrogenase family. In terms of assembly, forms a 24-polypeptide structural core with octahedral symmetry. Requires (R)-lipoate as cofactor.

It catalyses the reaction N(6)-[(R)-dihydrolipoyl]-L-lysyl-[protein] + acetyl-CoA = N(6)-[(R)-S(8)-acetyldihydrolipoyl]-L-lysyl-[protein] + CoA. In terms of biological role, the pyruvate dehydrogenase complex catalyzes the overall conversion of pyruvate to acetyl-CoA and CO(2). It contains multiple copies of three enzymatic components: pyruvate dehydrogenase (E1), dihydrolipoamide acetyltransferase (E2) and lipoamide dehydrogenase (E3). The polypeptide is Dihydrolipoyllysine-residue acetyltransferase component of pyruvate dehydrogenase complex (pdhC) (Mycoplasma capricolum subsp. capricolum (strain California kid / ATCC 27343 / NCTC 10154)).